A 420-amino-acid polypeptide reads, in one-letter code: Probable glucuronosyltransferase Os04g0398600 (420 aa).

Residues 1–4 (MGSR) are Cytoplasmic-facing. The chain crosses the membrane as a helical; Signal-anchor for type II membrane protein span at residues 5-25 (TVGWWLLAAAVVLAAAAADSG). The Lumenal portion of the chain corresponds to 26–420 (EAERAAEQHS…AGPVGDLKAW (395 aa)). N147 and N408 each carry an N-linked (GlcNAc...) asparagine glycan.

Belongs to the glycosyltransferase 47 family.

It is found in the golgi apparatus membrane. Involved in the synthesis of glucuronoxylan hemicellulose in secondary cell walls. This Oryza sativa subsp. japonica (Rice) protein is Probable glucuronosyltransferase Os04g0398600.